The sequence spans 103 residues: Large ribosomal subunit protein bL21 (103 aa).

This sequence belongs to the bacterial ribosomal protein bL21 family. As to quaternary structure, part of the 50S ribosomal subunit. Contacts protein L20.

Its function is as follows. This protein binds to 23S rRNA in the presence of protein L20. This Nitrosomonas europaea (strain ATCC 19718 / CIP 103999 / KCTC 2705 / NBRC 14298) protein is Large ribosomal subunit protein bL21.